Consider the following 193-residue polypeptide: Xanthine phosphoribosyltransferase (193 aa).

Residues Leu20 and Thr27 each contribute to the xanthine site. 128 to 132 (ANGQA) is a 5-phospho-alpha-D-ribose 1-diphosphate binding site. Lys156 lines the xanthine pocket.

It belongs to the purine/pyrimidine phosphoribosyltransferase family. Xpt subfamily. As to quaternary structure, homodimer.

The protein resides in the cytoplasm. It catalyses the reaction XMP + diphosphate = xanthine + 5-phospho-alpha-D-ribose 1-diphosphate. It participates in purine metabolism; XMP biosynthesis via salvage pathway; XMP from xanthine: step 1/1. Converts the preformed base xanthine, a product of nucleic acid breakdown, to xanthosine 5'-monophosphate (XMP), so it can be reused for RNA or DNA synthesis. The chain is Xanthine phosphoribosyltransferase from Streptococcus pneumoniae serotype 2 (strain D39 / NCTC 7466).